We begin with the raw amino-acid sequence, 137 residues long: Large-conductance mechanosensitive channel (137 aa).

Topologically, residues 1–16 are cytoplasmic; that stretch reads MSIIKEFREFAMRGNV. Residues 17-45 form a helical membrane-spanning segment; that stretch reads VDLAVGVIIGALFGKIVSSLVSDIIMPPL. Topologically, residues 46–74 are periplasmic; the sequence is GLLIGGVDFKQFALFLRNAQGGIPAVVMN. Residues 75-94 traverse the membrane as a helical segment; the sequence is YGAFIQNIFDFIIVAFAIFI. The Cytoplasmic portion of the chain corresponds to 95 to 137; that stretch reads AIKLMNKMRCKQEDTPAAPPKPSAEEKLLAEIRDLLKEQQTRQ.

The protein belongs to the MscL family. As to quaternary structure, homopentamer.

It is found in the cell inner membrane. Its function is as follows. Channel that opens in response to stretch forces in the membrane lipid bilayer. Forms a nonselective ion channel with a conductance of about 4 nanosiemens. May participate in the regulation of osmotic pressure changes within the cell. This is Large-conductance mechanosensitive channel from Pectobacterium carotovorum (Erwinia carotovora).